A 67-amino-acid polypeptide reads, in one-letter code: Medusin-S1 (67 aa).

An N-terminal signal peptide occupies residues 1 to 22 (MSFLKKSLFLVLFLGFVSLSIC). Residues 23-48 (EEEKRETEEKENEQEDDREERSEEKR) constitute a propeptide that is removed on maturation. A disordered region spans residues 26 to 47 (KRETEEKENEQEDDREERSEEK). The segment covering 31–40 (EKENEQEDDR) has biased composition (acidic residues). Position 66 is a leucine amide (Leu-66).

It belongs to the frog skin active peptide (FSAP) family. Medusin subfamily. As to expression, expressed by the skin glands.

It is found in the secreted. The protein localises to the target cell membrane. Antibacterial peptide with moderate activity against the Gram-positive bacteria (S.aureus ATCC 25923, MIC=25 uM), but not against all other bacteria (both Gram-positive and Gram-negative) tested. Does not show activity against fungi, and against Leishmania species. It adopts an alpha-helical structure with very low amphipathicity in membrane environments. This is Medusin-S1 from Phyllomedusa sauvagei (Sauvage's leaf frog).